Reading from the N-terminus, the 283-residue chain is Pantothenate synthetase (283 aa).

Residue 30–37 participates in ATP binding; the sequence is MGYFHDGH. His37 acts as the Proton donor in catalysis. Residue Gln61 participates in (R)-pantoate binding. Gln61 is a binding site for beta-alanine. Residue 147-150 participates in ATP binding; the sequence is GSKD. Gln153 serves as a coordination point for (R)-pantoate. ATP contacts are provided by residues Val176 and 184 to 187; that span reads MSSR.

This sequence belongs to the pantothenate synthetase family. In terms of assembly, homodimer.

It is found in the cytoplasm. The catalysed reaction is (R)-pantoate + beta-alanine + ATP = (R)-pantothenate + AMP + diphosphate + H(+). It participates in cofactor biosynthesis; (R)-pantothenate biosynthesis; (R)-pantothenate from (R)-pantoate and beta-alanine: step 1/1. Catalyzes the condensation of pantoate with beta-alanine in an ATP-dependent reaction via a pantoyl-adenylate intermediate. The polypeptide is Pantothenate synthetase (Desulforapulum autotrophicum (strain ATCC 43914 / DSM 3382 / VKM B-1955 / HRM2) (Desulfobacterium autotrophicum)).